An 86-amino-acid polypeptide reads, in one-letter code: UPF0386 protein RC1_1783 (86 aa).

The protein belongs to the UPF0386 family.

The protein is UPF0386 protein RC1_1783 of Rhodospirillum centenum (strain ATCC 51521 / SW).